The sequence spans 94 residues: Pyrimidine/purine nucleoside phosphorylase (94 aa).

It belongs to the nucleoside phosphorylase PpnP family.

The enzyme catalyses a purine D-ribonucleoside + phosphate = a purine nucleobase + alpha-D-ribose 1-phosphate. It carries out the reaction adenosine + phosphate = alpha-D-ribose 1-phosphate + adenine. The catalysed reaction is cytidine + phosphate = cytosine + alpha-D-ribose 1-phosphate. It catalyses the reaction guanosine + phosphate = alpha-D-ribose 1-phosphate + guanine. The enzyme catalyses inosine + phosphate = alpha-D-ribose 1-phosphate + hypoxanthine. It carries out the reaction thymidine + phosphate = 2-deoxy-alpha-D-ribose 1-phosphate + thymine. The catalysed reaction is uridine + phosphate = alpha-D-ribose 1-phosphate + uracil. It catalyses the reaction xanthosine + phosphate = alpha-D-ribose 1-phosphate + xanthine. Catalyzes the phosphorolysis of diverse nucleosides, yielding D-ribose 1-phosphate and the respective free bases. Can use uridine, adenosine, guanosine, cytidine, thymidine, inosine and xanthosine as substrates. Also catalyzes the reverse reactions. In Pseudomonas putida (strain W619), this protein is Pyrimidine/purine nucleoside phosphorylase.